A 292-amino-acid polypeptide reads, in one-letter code: Secreted frizzled-related protein 2 (292 aa).

A signal peptide spans 1-20 (MPRRLCALLLLASQCLGSTA). Residues 32–152 (YKRSNCKPIP…PKDNDLCIPL (121 aa)) form the FZ domain. Cystine bridges form between C37-C100, C47-C93, C84-C122, C111-C149, C115-C139, C169-C242, and C187-C292. The NTR domain occupies 169-292 (CDACKNKNED…FSRSIRKLQC (124 aa)).

This sequence belongs to the secreted frizzled-related protein (sFRP) family.

The protein resides in the secreted. Its function is as follows. Soluble frizzled-related proteins (sFRPS) function as modulators of Wnt signaling through direct interaction with Wnts. They have a role in regulating cell growth and differentiation in specific cell types. SFRP2 appears to be associated with myogenesis. The polypeptide is Secreted frizzled-related protein 2 (SFRP2) (Gallus gallus (Chicken)).